The primary structure comprises 364 residues: Methylthioribose-1-phosphate isomerase (364 aa).

Asp-254 serves as the catalytic Proton donor.

Belongs to the eIF-2B alpha/beta/delta subunits family. MtnA subfamily.

It is found in the cytoplasm. It localises to the nucleus. It catalyses the reaction 5-(methylsulfanyl)-alpha-D-ribose 1-phosphate = 5-(methylsulfanyl)-D-ribulose 1-phosphate. It participates in amino-acid biosynthesis; L-methionine biosynthesis via salvage pathway; L-methionine from S-methyl-5-thio-alpha-D-ribose 1-phosphate: step 1/6. Its function is as follows. Catalyzes the interconversion of methylthioribose-1-phosphate (MTR-1-P) into methylthioribulose-1-phosphate (MTRu-1-P). This chain is Methylthioribose-1-phosphate isomerase, found in Drosophila ananassae (Fruit fly).